The following is a 400-amino-acid chain: Cell division protein FtsZ 2 (400 aa).

The segment covering 1 to 16 (MQDIVREAMERDEAER) has biased composition (basic and acidic residues). Residues 1–30 (MQDIVREAMERDEAERQTQSSLEDSDDQFG) form a disordered region. GTP-binding positions include 41–45 (GAGNN), 128–130 (GTG), Glu159, Arg162, and Asp205. The interval 338 to 400 (VLGPSTQKQA…EKNNGLDVIR (63 aa)) is disordered. Over residues 352–364 (QSIQSRESQQQHS) the composition is skewed to low complexity. Over residues 365-382 (GSEFDSSERAQTAQSGTW) the composition is skewed to polar residues. Basic and acidic residues predominate over residues 385–400 (GGRDEVEKNNGLDVIR).

It belongs to the FtsZ family. As to quaternary structure, homodimer. Polymerizes to form a dynamic ring structure in a strictly GTP-dependent manner. Interacts directly with several other division proteins. Interacts with SepF.

It is found in the cytoplasm. Its function is as follows. Essential cell division protein that forms a contractile ring structure (Z ring) at the future cell division site. The regulation of the ring assembly controls the timing and the location of cell division. One of the functions of the FtsZ ring is to recruit other cell division proteins to the septum to produce a new cell wall between the dividing cells. Binds GTP and shows GTPase activity. Required for division ring constriction. This Haloferax volcanii (strain ATCC 29605 / DSM 3757 / JCM 8879 / NBRC 14742 / NCIMB 2012 / VKM B-1768 / DS2) (Halobacterium volcanii) protein is Cell division protein FtsZ 2.